A 351-amino-acid polypeptide reads, in one-letter code: UDP-3-O-acylglucosamine N-acyltransferase (351 aa).

The Proton acceptor role is filled by His-240.

This sequence belongs to the transferase hexapeptide repeat family. LpxD subfamily. In terms of assembly, homotrimer.

It carries out the reaction a UDP-3-O-[(3R)-3-hydroxyacyl]-alpha-D-glucosamine + a (3R)-hydroxyacyl-[ACP] = a UDP-2-N,3-O-bis[(3R)-3-hydroxyacyl]-alpha-D-glucosamine + holo-[ACP] + H(+). It participates in bacterial outer membrane biogenesis; LPS lipid A biosynthesis. Catalyzes the N-acylation of UDP-3-O-acylglucosamine using 3-hydroxyacyl-ACP as the acyl donor. Is involved in the biosynthesis of lipid A, a phosphorylated glycolipid that anchors the lipopolysaccharide to the outer membrane of the cell. The protein is UDP-3-O-acylglucosamine N-acyltransferase of Pseudomonas syringae pv. tomato (strain ATCC BAA-871 / DC3000).